The sequence spans 492 residues: Glutamyl-tRNA(Gln) amidotransferase subunit A (492 aa).

Catalysis depends on charge relay system residues K79 and S154. S178 serves as the catalytic Acyl-ester intermediate.

The protein belongs to the amidase family. GatA subfamily. Heterotrimer of A, B and C subunits.

It carries out the reaction L-glutamyl-tRNA(Gln) + L-glutamine + ATP + H2O = L-glutaminyl-tRNA(Gln) + L-glutamate + ADP + phosphate + H(+). In terms of biological role, allows the formation of correctly charged Gln-tRNA(Gln) through the transamidation of misacylated Glu-tRNA(Gln) in organisms which lack glutaminyl-tRNA synthetase. The reaction takes place in the presence of glutamine and ATP through an activated gamma-phospho-Glu-tRNA(Gln). This chain is Glutamyl-tRNA(Gln) amidotransferase subunit A, found in Acinetobacter baumannii (strain ACICU).